Reading from the N-terminus, the 372-residue chain is Ciliary neurotrophic factor receptor subunit alpha (372 aa).

Positions 1 to 22 are cleaved as a signal peptide; that stretch reads MAASVPWACCAVLAAAAAAVYT. The 78-residue stretch at 27–104 folds into the Ig-like C2-type domain; that stretch reads PQEAPHVQYE…WHLRHQVLLH (78 aa). Cys46 and Cys89 are oxidised to a cystine. Asn60, Asn70, Asn142, Asn190, and Asn261 each carry an N-linked (GlcNAc...) asparagine glycan. Fibronectin type-III domains follow at residues 108–205 and 206–306; these read PPRE…VKPD and PPEN…TEEP. The WSXWS motif signature appears at 290-294; the sequence is WSDWS. The segment at 301 to 339 is disordered; that stretch reads PWTEEPRHLTTEAQAPETTTSTTSSLAPPPTTKICDPGE. The span at 311 to 326 shows a compositional bias: low complexity; it reads TEAQAPETTTSTTSSL. Residue Ser342 is the site of GPI-anchor amidated serine attachment. Positions 343 to 372 are cleaved as a propeptide — removed in mature form; that stretch reads GGGPSIPFLTSVPVTLVLAAAAATANNLLI.

This sequence belongs to the type I cytokine receptor family. Type 3 subfamily. As to quaternary structure, forms a heterotrimer with LIFR and IL6ST. Interacts with heterodimeric neurotropic cytokine composed of CLCF1/CLC and CRLF1/CLF-1. Either alone or in complex with the heterodimer CLCF1-CRLF1 interacts with SORL1; this interaction may promote internalization and lysosomal degradation. In terms of tissue distribution, nervous system.

It is found in the cell membrane. Binds to CNTF. The alpha subunit provides the receptor specificity. The polypeptide is Ciliary neurotrophic factor receptor subunit alpha (Cntfr) (Rattus norvegicus (Rat)).